The sequence spans 317 residues: Dehydrogenase/reductase SDR family member 12 (317 aa).

NAD(+) is bound by residues Ser-50 and Ile-52. Ser-175 serves as a coordination point for substrate. NAD(+) contacts are provided by Tyr-201, Lys-205, and Thr-234. The active-site Proton acceptor is the Tyr-201.

It belongs to the short-chain dehydrogenases/reductases (SDR) family.

Its function is as follows. Putative oxidoreductase. The chain is Dehydrogenase/reductase SDR family member 12 (DHRS12) from Bos taurus (Bovine).